A 467-amino-acid chain; its full sequence is MSQLLTTRQAEELHKSIIAYLASVNLSESATTLRAELGDAVTIDDATIKKYEGLLEKKWTSVVRLQKKIMDLESRCAALQSELDSATPTSLLRKNQDPTAWLPRAPPRHTLESHRSPVTCVAFHPVFSSLASGSDDTTIKIWDWELGELERTVKGHTKAVLDVDYGGPRGGTLLASCSSDLTIKLWDPSDDYKNIRTLPGHDHSVSSVRFIPSGAAGSPMSGNLLVSASRDKTLRIWDVTTGYCVKTLSGHVDWVRAVAPSIDGRFLFAAGDDRIPRLWDLSAAETRSTFLGHEHVIECVAIAPAASYPHLAVLSGLKKPPSASSSAEFFATGSRDKTIRLWDSRGNLIKTLVGHDNWVRALAFHPGGKYLLSVSDDKTIRCWDLTQECKCVRTIADTHEHFVTCLRWAPPLIKDSGANGDAGANGTPAATTTSNGARQDPNAANKISIRCVIATGSVDQKVRVFAT.

Residues 9-41 (QAEELHKSIIAYLASVNLSESATTLRAELGDAV) enclose the LisH domain. A coiled-coil region spans residues 60-87 (TSVVRLQKKIMDLESRCAALQSELDSAT). WD repeat units follow at residues 113 to 154 (SHRS…RTVK), 156 to 196 (HTKA…KNIR), 200 to 247 (GHDH…CVKT), 250 to 289 (GHVD…TRST), 292 to 352 (GHEH…IKTL), 354 to 393 (GHDN…KCVR), 398 to 428 (THEH…NGTP), and 429 to 466 (AATT…RVFA). Low complexity predominate over residues 417-437 (GANGDAGANGTPAATTTSNGA). Positions 417–441 (GANGDAGANGTPAATTTSNGARQDP) are disordered.

Belongs to the WD repeat LIS1/nudF family. In terms of assembly, self-associates. Interacts with nudE and dynein.

The protein resides in the cytoplasm. The protein localises to the cytoskeleton. It is found in the spindle pole. Functionally, positively regulates the activity of the minus-end directed microtubule motor protein dynein. May enhance dynein-mediated microtubule sliding by targeting dynein to the microtubule plus end. Required for nuclear migration during vegetative growth as well as development. Required for retrograde early endosome (EE) transport from the hyphal tip. Required for localization of dynein to the mitotic spindle poles. Recruits additional proteins to the dynein complex at SPBs. The polypeptide is Nuclear distribution protein nudF 1 (Aspergillus clavatus (strain ATCC 1007 / CBS 513.65 / DSM 816 / NCTC 3887 / NRRL 1 / QM 1276 / 107)).